Reading from the N-terminus, the 310-residue chain is GPN-loop GTPase 2 (310 aa).

Alanine 2 is subject to N-acetylalanine. Residue 19–24 (GSGKTT) participates in GTP binding. The Gly-Pro-Asn (GPN)-loop; involved in dimer interface signature appears at 76–78 (GPN). 178-181 (SKMD) contacts GTP.

It belongs to the GPN-loop GTPase family. Heterodimers with GPN1 or GPN3. Binds to RNA polymerase II (RNAPII).

Its function is as follows. Small GTPase required for proper localization of RNA polymerase II and III (RNAPII and RNAPIII). May act at an RNAP assembly step prior to nuclear import. This chain is GPN-loop GTPase 2 (GPN2), found in Bos taurus (Bovine).